The chain runs to 458 residues: Serine protease HTRA2, mitochondrial (458 aa).

The transit peptide at 1–31 (MAALRAGRGAGWSLRGWRALWGGRWGKGPLL) directs the protein to the mitochondrion. Residues 32 to 133 (TPDLRALLTS…GGRGPPAVLA (102 aa)) constitute a propeptide that is removed on maturation. The helical transmembrane segment at 105 to 125 (VWLAVALGAGGAVLLLFWGGG) threads the bilayer. Positions 134–137 (SVLG) match the IAP-binding motif motif. The segment at 166-342 (ILGRHPFSGR…IPSDRLREFL (177 aa)) is serine protease. Residues His-198, Asp-228, and Ser-306 each act as charge relay system in the active site. The 82-residue stretch at 364 to 445 (VMMLTLTPSI…QLAVRIRRGQ (82 aa)) folds into the PDZ domain.

It belongs to the peptidase S1C family. Homotrimer. Interacts with MXI2. Interacts with THAP5 under apoptotic conditions. The mature protein, but not the precursor, binds to BIRC2/c-IAP1, BIRC3/c-IAP2 and XIAP/BIRC4. Interacts with BIRC6/bruce. Interacts with AREL1 (via HECT domain); in the cytoplasm following induction of apoptosis. In terms of processing, ubiquitinated by BIRC6; this activity is inhibited by DIABLO/SMAC. Autoproteolytically activated.

It is found in the mitochondrion intermembrane space. Its subcellular location is the mitochondrion membrane. The enzyme catalyses Cleavage of non-polar aliphatic amino-acids at the P1 position, with a preference for Val, Ile and Met. At the P2 and P3 positions, Arg is selected most strongly with a secondary preference for other hydrophilic residues.. With respect to regulation, inhibited by BIRC6. Its function is as follows. Serine protease that shows proteolytic activity against a non-specific substrate beta-casein. Promotes apoptosis by either relieving the inhibition of BIRC proteins on caspases, leading to an increase in caspase activity; or by a BIRC inhibition-independent, caspase-independent and serine protease activity-dependent mechanism. Cleaves BIRC6 and relieves its inhibition on CASP3, CASP7 and CASP9, but it is also prone to inhibition by BIRC6. Cleaves THAP5 and promotes its degradation during apoptosis. The chain is Serine protease HTRA2, mitochondrial (HTRA2) from Bos taurus (Bovine).